A 373-amino-acid chain; its full sequence is Peptide chain release factor 2 (373 aa).

Q251 is modified (N5-methylglutamine).

Belongs to the prokaryotic/mitochondrial release factor family. Methylated by PrmC. Methylation increases the termination efficiency of RF2.

The protein localises to the cytoplasm. Peptide chain release factor 2 directs the termination of translation in response to the peptide chain termination codons UGA and UAA. The protein is Peptide chain release factor 2 of Salinispora tropica (strain ATCC BAA-916 / DSM 44818 / JCM 13857 / NBRC 105044 / CNB-440).